The sequence spans 340 residues: Phosphoribosylformylglycinamidine cyclo-ligase (340 aa).

This sequence belongs to the AIR synthase family.

Its subcellular location is the cytoplasm. It catalyses the reaction 2-formamido-N(1)-(5-O-phospho-beta-D-ribosyl)acetamidine + ATP = 5-amino-1-(5-phospho-beta-D-ribosyl)imidazole + ADP + phosphate + H(+). It participates in purine metabolism; IMP biosynthesis via de novo pathway; 5-amino-1-(5-phospho-D-ribosyl)imidazole from N(2)-formyl-N(1)-(5-phospho-D-ribosyl)glycinamide: step 2/2. This is Phosphoribosylformylglycinamidine cyclo-ligase from Lactococcus lactis subsp. cremoris (strain MG1363).